A 156-amino-acid chain; its full sequence is Small ribosomal subunit protein uS7A/uS7B (156 aa).

Belongs to the universal ribosomal protein uS7 family. Part of the 30S ribosomal subunit. Contacts proteins S9 and S11.

Its function is as follows. One of the primary rRNA binding proteins, it binds directly to 16S rRNA where it nucleates assembly of the head domain of the 30S subunit. Is located at the subunit interface close to the decoding center, probably blocks exit of the E-site tRNA. This Cereibacter sphaeroides (strain ATCC 17029 / ATH 2.4.9) (Rhodobacter sphaeroides) protein is Small ribosomal subunit protein uS7A/uS7B.